We begin with the raw amino-acid sequence, 85 residues long: Large ribosomal subunit protein bL27 (85 aa).

The tract at residues 1-20 is disordered; that stretch reads MATKKAGGSTRNGRDSEAKR.

It belongs to the bacterial ribosomal protein bL27 family.

In Haemophilus influenzae (strain ATCC 51907 / DSM 11121 / KW20 / Rd), this protein is Large ribosomal subunit protein bL27.